Reading from the N-terminus, the 149-residue chain is D-aminoacyl-tRNA deacylase (149 aa).

The Gly-cisPro motif, important for rejection of L-amino acids signature appears at 137-138 (GP).

It belongs to the DTD family. As to quaternary structure, homodimer.

The protein resides in the cytoplasm. It catalyses the reaction glycyl-tRNA(Ala) + H2O = tRNA(Ala) + glycine + H(+). The catalysed reaction is a D-aminoacyl-tRNA + H2O = a tRNA + a D-alpha-amino acid + H(+). Its function is as follows. An aminoacyl-tRNA editing enzyme that deacylates mischarged D-aminoacyl-tRNAs. Also deacylates mischarged glycyl-tRNA(Ala), protecting cells against glycine mischarging by AlaRS. Acts via tRNA-based rather than protein-based catalysis; rejects L-amino acids rather than detecting D-amino acids in the active site. By recycling D-aminoacyl-tRNA to D-amino acids and free tRNA molecules, this enzyme counteracts the toxicity associated with the formation of D-aminoacyl-tRNA entities in vivo and helps enforce protein L-homochirality. This Desulforamulus reducens (strain ATCC BAA-1160 / DSM 100696 / MI-1) (Desulfotomaculum reducens) protein is D-aminoacyl-tRNA deacylase.